A 1518-amino-acid polypeptide reads, in one-letter code: Putative cellulose synthase 3 (1518 aa).

The tract at residues 1 to 731 (MYGTWFTTGK…EEKLEKQSFV (731 aa)) is catalytic. 3 helical membrane-spanning segments follow: residues 24–44 (PVWV…SVRI), 71–91 (ITVF…VWRL), and 105–125 (LAVL…LSYF). The segment at 144 to 237 (QWPSVDVFVP…FAVIFDCDHV (94 aa)) is catalytic subdomain A. Catalysis depends on residues D186 and D330. The tract at residues 314–374 (EAVMGIGGFA…GQRVRWARGM (61 aa)) is catalytic subdomain B. A run of 5 helical transmembrane segments spans residues 404–424 (FLFA…LFLG), 428–448 (IAAS…HSVI), 465–485 (IYET…LLQP), 514–534 (ILAG…VWQF), and 543–563 (FILN…SIAV). In terms of domain architecture, PilZ spans 569-668 (QTRNAPRVSV…ERQVVSMVFG (100 aa)). The cyclic di-GMP binding domain stretch occupies residues 732–1518 (LKPVPRSARH…IARDDLTGEL (787 aa)). The segment at 765 to 785 (APSPDQSGVTAETPFGDSNTG) is disordered. The segment covering 768–785 (PDQSGVTAETPFGDSNTG) has biased composition (polar residues). The helical transmembrane segment at 1481–1501 (ALYLAGLAGAGLAALGVWAWL) threads the bilayer.

This sequence in the N-terminal section; belongs to the glycosyltransferase 2 family. In the C-terminal section; belongs to the AcsB/BcsB family.

Its subcellular location is the cell inner membrane. It catalyses the reaction [(1-&gt;4)-beta-D-glucosyl](n) + UDP-alpha-D-glucose = [(1-&gt;4)-beta-D-glucosyl](n+1) + UDP + H(+). Its pathway is glycan metabolism; bacterial cellulose biosynthesis. The polypeptide is Putative cellulose synthase 3 (bcsABII-B) (Komagataeibacter xylinus (Gluconacetobacter xylinus)).